A 172-amino-acid polypeptide reads, in one-letter code: Large ribosomal subunit protein bL17 (172 aa).

The interval 153 to 172 is disordered; it reads AQAAEPVAAAEPATPATTAG.

Belongs to the bacterial ribosomal protein bL17 family. In terms of assembly, part of the 50S ribosomal subunit. Contacts protein L32.

The chain is Large ribosomal subunit protein bL17 from Sorangium cellulosum (strain So ce56) (Polyangium cellulosum (strain So ce56)).